The following is a 322-amino-acid chain: Digestive cysteine proteinase 1 (322 aa).

The first 16 residues, 1–16 (MKVVALFLFGLALAAA), serve as a signal peptide directing secretion. A propeptide spans 17-105 (NPSWEEFKGK…VFTSTDAAPE (89 aa)) (activation peptide). Cystine bridges form between C126–C170, C160–C203, and C262–C311. Residue C129 is part of the active site. Catalysis depends on residues H269 and N289.

The protein belongs to the peptidase C1 family.

With respect to regulation, inhibited by E-64, antipain, leupeptin, heavy metal ions, iodoacetic acid, dithionitrobenzene, p-hydroxymercuri-benzoate; activated by mercaptoethanol and dithiothreitol. The polypeptide is Digestive cysteine proteinase 1 (LCP1) (Homarus americanus (American lobster)).